The sequence spans 179 residues: MPGLKLVEALEYRCDRLERLIGAGYSANSDVSVQLDELYNQLHRLYFQGLKYSQDLLQLFNTFMAEDIENVGAPDDICIFASCFDDIYTLYSAFDELNSQYMEFCQISKSSLDQISFKDANIETKQLKKLPELVDNCNIMILRSIAILNRFIDWNIEVNGFFQFQKKRLLNLQKVIYST.

May be involved in protein-linked oligosaccharide phosphorylation since the deletion reduces the negative charge of the cell surface. The polypeptide is Protein LDB18 (LDB18) (Saccharomyces cerevisiae (strain ATCC 204508 / S288c) (Baker's yeast)).